Here is a 470-residue protein sequence, read N- to C-terminus: Na(+)/H(+) antiporter NhaA 2 (470 aa).

The next 11 helical transmembrane spans lie at 34-54 (FLHI…IALL), 85-105 (LEWV…GMEI), 121-141 (ALPA…YLLL), 150-170 (GWGV…TLLG), 179-199 (VLLL…IAVF), 202-222 (SGVA…VFAM), 241-261 (WAGV…IGLI), 317-337 (SLIA…FALA), 357-377 (LATA…ACWL), 395-415 (LLVL…IAQL), and 423-443 (LAAG…VALV).

It belongs to the NhaA Na(+)/H(+) (TC 2.A.33) antiporter family.

It localises to the cell inner membrane. The enzyme catalyses Na(+)(in) + 2 H(+)(out) = Na(+)(out) + 2 H(+)(in). In terms of biological role, na(+)/H(+) antiporter that extrudes sodium in exchange for external protons. The sequence is that of Na(+)/H(+) antiporter NhaA 2 from Myxococcus xanthus (strain DK1622).